An 85-amino-acid chain; its full sequence is MGELGHRRTQTGVVVSDKMEKTVVVRVDRLVKHPLYNKYIKRSVKYKVHDEKNSCKAGDKVQIVECRPLSKDKRWALRQILESAA.

The protein belongs to the universal ribosomal protein uS17 family. Part of the 30S ribosomal subunit.

One of the primary rRNA binding proteins, it binds specifically to the 5'-end of 16S ribosomal RNA. This Trichlorobacter lovleyi (strain ATCC BAA-1151 / DSM 17278 / SZ) (Geobacter lovleyi) protein is Small ribosomal subunit protein uS17.